A 609-amino-acid chain; its full sequence is MHQNIRNIAIIAHVDHGKTTLLDQLLQQSGTFQKHEEKKERIMDSNDLEKERGITILSKNTSIKWKEYKINIVDTPGHADFGGEVERVMSMVDSVLLIVDALDGPMPQTRFVTKKAFKYGLNPIVVINKIDRKNSRPDWVINEIFDLFVNLNANDKQLDFPIIYTSAILGTSGINYLDMKENMIPLYEAIIKYAPAPNVDPNQKFQMQISQLDYNNYLGVIGVGRIKQGHIKPNDSVVIIDSLGNTRNGKINKVLNYFGLKRLEIQKGDAGDIIAITGLNKLNISDTICHPDNLCPLPPLIIDEPTVNMFFSVNTSPFSGKEGKYITSRQILERLKKETIHNVALQVKETKDANIFSVSGRGELHLSILIENMRREGFELEVSRPKIIFREINDIKQEPFENIILDIEEKHQGNIMKFIGERKGELKNITVDPNKRIRLEYLLSSRALIGFRTEFMSITSGTGLFYSSFSHYQKYQKNDIGQRKNGVLISNSTGMAVAFALFNLQERGKLFLGHGTQVYEGQIIGLHNRSNDLTVNCLTGKKLTNMRASGTDEAIILTTFTKFTLEEALSFINDDELVEITPKSIRLRKRYLKENERKKANRDRTTIVD.

Residues 3-198 form the tr-type G domain; that stretch reads QNIRNIAIIA…AIIKYAPAPN (196 aa). GTP-binding positions include 15 to 20 and 128 to 131; these read DHGKTT and NKID.

Belongs to the TRAFAC class translation factor GTPase superfamily. Classic translation factor GTPase family. BipA subfamily. In terms of assembly, monomer.

It is found in the cytoplasm. The enzyme catalyses GTP + H2O = GDP + phosphate + H(+). Its function is as follows. A 50S ribosomal subunit assembly protein with GTPase activity, required for 50S subunit assembly at low temperatures, may also play a role in translation. Binds GTP and analogs. Binds the 70S ribosome between the 30S and 50S subunits, in a similar position as ribosome-bound EF-G; it contacts a number of ribosomal proteins, both rRNAs and the A-site tRNA. This Buchnera aphidicola subsp. Schizaphis graminum (strain Sg) protein is Large ribosomal subunit assembly factor BipA.